The sequence spans 236 residues: Flagellar L-ring protein (236 aa).

An N-terminal signal peptide occupies residues 1-24 (MKNKNRLNTIKLLSISLLIAVTTA). Cysteine 25 is lipidated: N-palmitoyl cysteine. Cysteine 25 is lipidated: S-diacylglycerol cysteine.

It belongs to the FlgH family. The basal body constitutes a major portion of the flagellar organelle and consists of four rings (L,P,S, and M) mounted on a central rod.

Its subcellular location is the cell outer membrane. It is found in the bacterial flagellum basal body. Assembles around the rod to form the L-ring and probably protects the motor/basal body from shearing forces during rotation. The sequence is that of Flagellar L-ring protein from Colwellia psychrerythraea (strain 34H / ATCC BAA-681) (Vibrio psychroerythus).